The chain runs to 220 residues: NADH-quinone oxidoreductase subunit I (220 aa).

4Fe-4S ferredoxin-type domains follow at residues 71-102 (LQRL…IITH) and 112-141 (DSYT…MGNR). [4Fe-4S] cluster-binding residues include Cys-82, Cys-85, Cys-88, Cys-92, Cys-121, Cys-124, Cys-127, and Cys-131. The segment at 187–220 (MQATPLDYVQEPSKEESKEESPTSPESHKGDENV) is disordered. Residues 198–220 (PSKEESKEESPTSPESHKGDENV) are compositionally biased toward basic and acidic residues.

It belongs to the complex I 23 kDa subunit family. In terms of assembly, NDH-1 is composed of 14 different subunits. Subunits NuoA, H, J, K, L, M, N constitute the membrane sector of the complex. The cofactor is [4Fe-4S] cluster.

It localises to the cell inner membrane. The catalysed reaction is a quinone + NADH + 5 H(+)(in) = a quinol + NAD(+) + 4 H(+)(out). NDH-1 shuttles electrons from NADH, via FMN and iron-sulfur (Fe-S) centers, to quinones in the respiratory chain. The immediate electron acceptor for the enzyme in this species is believed to be ubiquinone. Couples the redox reaction to proton translocation (for every two electrons transferred, four hydrogen ions are translocated across the cytoplasmic membrane), and thus conserves the redox energy in a proton gradient. The polypeptide is NADH-quinone oxidoreductase subunit I (Helicobacter pylori (strain J99 / ATCC 700824) (Campylobacter pylori J99)).